A 250-amino-acid chain; its full sequence is Ribose-5-phosphate isomerase A (250 aa).

Residues 33–36 (TGST), 89–92 (DGAD), and 102–105 (KGGG) contribute to the substrate site. Glutamate 111 functions as the Proton acceptor in the catalytic mechanism. Residue lysine 129 participates in substrate binding.

The protein belongs to the ribose 5-phosphate isomerase family. As to quaternary structure, homodimer.

It catalyses the reaction aldehydo-D-ribose 5-phosphate = D-ribulose 5-phosphate. The protein operates within carbohydrate degradation; pentose phosphate pathway; D-ribose 5-phosphate from D-ribulose 5-phosphate (non-oxidative stage): step 1/1. In terms of biological role, catalyzes the reversible conversion of ribose-5-phosphate to ribulose 5-phosphate. This Cereibacter sphaeroides (strain ATCC 17025 / ATH 2.4.3) (Rhodobacter sphaeroides) protein is Ribose-5-phosphate isomerase A.